The following is a 216-amino-acid chain: Phosphorylated carbohydrates phosphatase TM_1254 (216 aa).

Catalysis depends on D7, which acts as the Nucleophile.

Belongs to the HAD-like hydrolase superfamily. Co(2+) serves as cofactor. It depends on Mg(2+) as a cofactor. Mn(2+) is required as a cofactor. The cofactor is Ni(2+).

Functionally, displays high phosphatase activity toward erythrose 4-phosphate, fructose 6-phosphate, 2-deoxyglucose 6-phosphate, and mannose 6-phosphate. May have a role in the intracellular metabolism of many phosphorylated carbohydrates. In Thermotoga maritima (strain ATCC 43589 / DSM 3109 / JCM 10099 / NBRC 100826 / MSB8), this protein is Phosphorylated carbohydrates phosphatase TM_1254.